Consider the following 98-residue polypeptide: NADH-ubiquinone oxidoreductase chain 4L (98 aa).

A run of 3 helical transmembrane segments spans residues 1–21 (MTLI…GLLM), 29–49 (ALLC…LTIL), and 61–81 (IILL…LVMV).

This sequence belongs to the complex I subunit 4L family. Core subunit of respiratory chain NADH dehydrogenase (Complex I) which is composed of 45 different subunits.

Its subcellular location is the mitochondrion inner membrane. The catalysed reaction is a ubiquinone + NADH + 5 H(+)(in) = a ubiquinol + NAD(+) + 4 H(+)(out). Functionally, core subunit of the mitochondrial membrane respiratory chain NADH dehydrogenase (Complex I) which catalyzes electron transfer from NADH through the respiratory chain, using ubiquinone as an electron acceptor. Part of the enzyme membrane arm which is embedded in the lipid bilayer and involved in proton translocation. This is NADH-ubiquinone oxidoreductase chain 4L (MT-ND4L) from Balaenoptera physalus (Fin whale).